Reading from the N-terminus, the 508-residue chain is UBX domain-containing protein 4 (508 aa).

Residues 1 to 200 are interaction with UBQLN1; that stretch reads MLWFQGAIPA…PTEDLTVRVE (200 aa). At 1–413 the chain is on the cytoplasmic side; that stretch reads MLWFQGAIPA…VHSSSGDFWT (413 aa). A disordered region spans residues 117–199; that stretch reads GEASLANGSQ…RPTEDLTVRV (83 aa). Residues 122-190 show a composition bias toward polar residues; sequence ANGSQSEGSV…QEPSGCSNQR (69 aa). The UBX domain maps to 315 to 393; it reads ERSTVARIQF…ELAPSASVVL (79 aa). Residues 414 to 434 lie within the membrane without spanning it; the sequence is LLGTVLYPFLAIWRLISNFLF. Residues 435–508 are Cytoplasmic-facing; the sequence is SNPPPAQTSV…TWNGNSTQQM (74 aa). Residues 450–459 are compositionally biased toward polar residues; sequence ETSNLASSSN. Residues 450–508 form a disordered region; sequence ETSNLASSSNSEKREPVRKRVLEKRGEDFKKEGKIYRLRTQDDGEDENNTWNGNSTQQM. Residues 460 to 491 show a composition bias toward basic and acidic residues; it reads SEKREPVRKRVLEKRGEDFKKEGKIYRLRTQD. The residue at position 489 (Thr489) is a Phosphothreonine. Residues 498-508 show a composition bias toward polar residues; the sequence is NTWNGNSTQQM.

As to quaternary structure, directly interacts with VCP. Interacts with UBQLN1. Forms a complex with VCP and UBQLN1.

The protein localises to the endoplasmic reticulum membrane. It is found in the nucleus envelope. Its function is as follows. Involved in endoplasmic reticulum-associated protein degradation (ERAD). Acts as a platform to recruit both UBQLN1 and VCP to the ER during ERAD. The protein is UBX domain-containing protein 4 (UBXN4) of Bos taurus (Bovine).